The following is a 401-amino-acid chain: Formate-dependent phosphoribosylglycinamide formyltransferase (401 aa).

N(1)-(5-phospho-beta-D-ribosyl)glycinamide-binding positions include 22 to 23 and Glu-82; that span reads EL. Residues Arg-115, Lys-157, 162–167, 197–200, and Glu-205 each bind ATP; these read SSGKGQ and EGFV. The ATP-grasp domain maps to 120-315; that stretch reads RLAAETLALP…EFELHARAIL (196 aa). Mg(2+) is bound by residues Glu-274 and Glu-286. Residues Asp-293, Lys-362, and 369 to 370 contribute to the N(1)-(5-phospho-beta-D-ribosyl)glycinamide site; that span reads RR.

Belongs to the PurK/PurT family. In terms of assembly, homodimer.

The enzyme catalyses N(1)-(5-phospho-beta-D-ribosyl)glycinamide + formate + ATP = N(2)-formyl-N(1)-(5-phospho-beta-D-ribosyl)glycinamide + ADP + phosphate + H(+). The protein operates within purine metabolism; IMP biosynthesis via de novo pathway; N(2)-formyl-N(1)-(5-phospho-D-ribosyl)glycinamide from N(1)-(5-phospho-D-ribosyl)glycinamide (formate route): step 1/1. In terms of biological role, involved in the de novo purine biosynthesis. Catalyzes the transfer of formate to 5-phospho-ribosyl-glycinamide (GAR), producing 5-phospho-ribosyl-N-formylglycinamide (FGAR). Formate is provided by PurU via hydrolysis of 10-formyl-tetrahydrofolate. In Polaromonas naphthalenivorans (strain CJ2), this protein is Formate-dependent phosphoribosylglycinamide formyltransferase.